The following is a 414-amino-acid chain: Glutamyl-tRNA reductase (414 aa).

Substrate is bound by residues 49–52 (TCNR), serine 108, 113–115 (EPQ), and glutamine 119. The active-site Nucleophile is cysteine 50. An NADP(+)-binding site is contributed by 188-193 (GAGQTG).

This sequence belongs to the glutamyl-tRNA reductase family. Homodimer.

It catalyses the reaction (S)-4-amino-5-oxopentanoate + tRNA(Glu) + NADP(+) = L-glutamyl-tRNA(Glu) + NADPH + H(+). The protein operates within porphyrin-containing compound metabolism; protoporphyrin-IX biosynthesis; 5-aminolevulinate from L-glutamyl-tRNA(Glu): step 1/2. In terms of biological role, catalyzes the NADPH-dependent reduction of glutamyl-tRNA(Glu) to glutamate 1-semialdehyde (GSA). This Francisella tularensis subsp. holarctica (strain FTNF002-00 / FTA) protein is Glutamyl-tRNA reductase.